The primary structure comprises 60 residues: Large ribosomal subunit protein uL30 (60 aa).

This sequence belongs to the universal ribosomal protein uL30 family. Part of the 50S ribosomal subunit.

The sequence is that of Large ribosomal subunit protein uL30 from Shewanella woodyi (strain ATCC 51908 / MS32).